The primary structure comprises 339 residues: Aspartate carbamoyltransferase catalytic subunit (339 aa).

R60 and T61 together coordinate carbamoyl phosphate. K88 provides a ligand contact to L-aspartate. R110, H143, and Q146 together coordinate carbamoyl phosphate. Residues R183 and R254 each coordinate L-aspartate. 2 residues coordinate carbamoyl phosphate: G295 and P296.

It belongs to the aspartate/ornithine carbamoyltransferase superfamily. ATCase family. Heterododecamer (2C3:3R2) of six catalytic PyrB chains organized as two trimers (C3), and six regulatory PyrI chains organized as three dimers (R2).

The enzyme catalyses carbamoyl phosphate + L-aspartate = N-carbamoyl-L-aspartate + phosphate + H(+). Its pathway is pyrimidine metabolism; UMP biosynthesis via de novo pathway; (S)-dihydroorotate from bicarbonate: step 2/3. Catalyzes the condensation of carbamoyl phosphate and aspartate to form carbamoyl aspartate and inorganic phosphate, the committed step in the de novo pyrimidine nucleotide biosynthesis pathway. The chain is Aspartate carbamoyltransferase catalytic subunit from Prochlorococcus marinus (strain MIT 9312).